Here is a 61-residue protein sequence, read N- to C-terminus: Defensin BmKDfsin2 (61 aa).

Residues 1–24 form the signal peptide; that stretch reads METIVLLFLLALVFCTLEMGMVEA. 3 disulfides stabilise this stretch: cysteine 28–cysteine 49, cysteine 35–cysteine 57, and cysteine 39–cysteine 59.

It belongs to the invertebrate defensin family. Type 2 subfamily. Highly expressed in non-venom gland (hemolymph) and moderately expressed in venom gland.

The protein resides in the secreted. Its function is as follows. Antibacterial peptide active against Gram-positive bacteria, but not on Gram-negative bacteria. Also has weak blocking activity on Kv1.1/KCNA1, Kv1.2/KCNA2, Kv1.3/KCNA3, KCa3.1/KCNN4/IK, KCa2.3/KCNN3/SK3 and Kv11.1/KCNH2/ERG1 channels (tested at 1 uM). It inhibits potassium channel current by interacting with the pore region. The sequence is that of Defensin BmKDfsin2 from Olivierus martensii (Manchurian scorpion).